Reading from the N-terminus, the 4650-residue chain is MDTMKRKHQGLFPVLNDGGREPSVTVNEISSEARERAIAYTARRGYDIVHFLRTVWSIVLQQFLETDLVCFVFFDHSGVQVCEVPVSREESIPNLLERIAELRPLPSALCEETRMNTGLLIGDTSLDVNPTAVLDTFRRIQKDNQPCDCLLVLEGEPPHRLALVATTTLLSSDQATAVASTVSQVMVEMSAEDNSRTVGDLSLLSEHDQQCLVRWNNFQAPPTNTDGSILDTIRAKALSQPEATAIHSPDVIMTYHELDTISNKLAVHLRLLGVRPDILVPFLFQRCHWVIVVQLAVLKAGGAFVPLEPAHPNARLAEITKRTNCGFLLTSDANAGRAALLAEKVVCINHSLMSSLPTDFTTYRLVPLSSPSSPAYVLFTSGSTGQPKGCVVDCRAMAQIPNQAVVQSMGLSSSTRVLQFASYTFAISIFEIYYALGSGATICMPTDHDRINSLATVMDEMKITWACMTPSLLRTLDPERSPATLKRVFLGGEPVVKGEFEAWAAIVDLVYVYGASEVSGAIGFTDHQCDGNDIAYRAFPGMRFWISDALDYHKLAPVGVTGELILEGPALAQRYLDDVQSTLTAFIDPPLWRQSLGLPTVGAASRMYKTGDLFRYAHDGSVIHVGRKGTQVKIRGKRLDLGEVEFHVSKCCPNVARVIAETAAPLDANGVPALVLFLYYSADDAGERNEETTPQTLFAAASERFQSIVQSTQTKLEQTLPDHMLPSFYLPLASIPMTVTGKVDRRALRESVQKCTRRELEAYQPTGVVELVPPETVLEKALHAVFAQVLRIDGATFGVHHSFIRLGGDSLAAMRAVGLLTTKEYNVTVADILGQPTVSKLAQYLRNTERPQRASAAASAPPPFSLLAGGHDETVASAAQQCGMSISAIEDCYPCTALQQGLMISTMRVPGRYIARCVFDLARGLDLERLKAAWQQTVDANVILRTRIVRRASGDLIQAVLGRQVSAIQWQSYPTVGAYKMEDAVIPMQPGDALARFALIGDTFSGWSLGLTLHHAIFDAHSLGLLLEQTQQAYYGANLDPNLFSPFIETVQKQDGASEREFWTATFADIHAPVFPSLPHDRAVPRASTHLERTIPLLSRTGSGITLSNVARLAWAIVVSAHTDSEDVVFGVTVNGRATATAGAQDMTGPTIATVPFPVRCQKQKKVADVLEAVQSLAISMMAFEQTGLQKIRQMSPQAAAACDFQSQLIFQRPAALDPSHQHDAPPIMVGKTALHGLEDFSVFIDYVIGAYFDGDILPGYMAERMMGQFANVLQQLCAGQHDRVVGELELNAQKEPLMPAVSSWDRGLTYRELDVLSATIAQTIIMPAGVKERDRVALCFEKSVWPVLSMLAVLRAGATAVNIDPTLPPARMSAILETGLPVIEISQTSVPMTTTTTEEAAQIQWPTVQPNDVAFILFTSGSTGTPKGIVIEHRHFTTAFHHHRDALLQEIFFTWVHGGCLCIPSEEQRLSNLAGFIREHQVNWAIMTPSASTILRPQSVPGLETLVLAGEPIPVELMELWSSRLRLLNGYGPAEAFTCAFNRIEPGSHHPGLFGPMCGVVGWVTVPDNADRLAALGAVGELLIEGPTVTRGYLDLPELSGEAFIDAPEWLRKIRPGYLGRKDTQVKQVVAEVVQPQGSAAVMLVAFVYTAPVQGHEEKTQLLLREPDENFLQACAAAVARLEGVLPAHMIPTAMCPLYRVPYGATSKIDRRQLRQAAERLTPEQLQAYTTGVADNCKNVSKEPPVSAAEKKWQALWARVLGVPTQRIGRDDLFFRLGGDSLSVIRLLDLAGQEGLPHLTFQDVLQNPRLREIAALSETRDSSRGSDDNDDGPAPFALVKDADALLRVATNLIAATVHQRGAYQAWAVTAKCNPILRTRIFQTPDGSSYQAVLNSPLNWSRHETLDDVFASQPVMGLGTPLAHLMLSPGHLHLVIHHALYDGWSLSLLVAEVDKAYLGLPLPPAAKFNNFIAHVESSMQIIDLPDNPTQSNVTVASKIKLAWALVSRAYTNNSDTVTGFVSSGRTAPVAGIVKVPGPTIASVPLRIRLSATQRYEHLGLQNISQQSEGGAAACQFQTLIAVEAKEHEVQGAGERHTWFCGEKTRPGGGAIEVTATFDPEVLASEQMHRVLAQLDHFLVQIQAVSEASATTIADLDILSDEDLQQLLRWNALPLPPTPWGCNRCVHDLVHDACQRRPAAVAIEAWDGQFTYQQIDDHVADLAHRIQTLGVVRPDTFVGLYIEKSRWTVVAQLAPLQRLRELCAITKLPLILTTEDQQEAVAGLFSLPTGCTRVKPSNAMYTIATSGTTGKPKVAVIEHGCFIANIQPIIDAVGINANSRVLQFAGYGFDAMLIEHMITLLVITEMGANWAMLTASVIQLLTPTNVPTLTTLVQAGEPMQQGIVDRWASHNCIPPGAAPYDIGYATGGVTWVVDPDTLDPVPIGAEGELIIEGDIVGRGYLNDLERTAAAFIPCPHWLADLRRSSNANGTEPGPGTQLHRVYRTGDLIKLRGQRLELTEVEHHVQQTFPGALQVVAAVSTLGAATDTDRTDILLPASNPDFHKAVETTELALVERVPAYMVPSIFIPLSRVPRDNNGKVDRRLINARLSSLSRKEADGYSPSSSAASTIVAPQNRLQHDIRAIWAGVLGMADEDIGIHNSFFRIGGDSITSMQHRTISQLALHATRKDDGEKRALPSEEEADVGLDHASVFLHLEGPGVGGAESMARALAVIVETHPMLRARFEKSSDGTWRQRVTGNADQSNYRYYHHGVTSQEQITSICSASQQALDIRHGPLLIIDQFERDDATTWLFLVAHHLVIDLVSWRVVLADLEQLLTTGERPKVPPTSFLRWCQLQADYAARLSAPHQVEEDQETDISAYWGKGVTRNTHRDVDRYALILDKQTSELLLTKANIALNTQPVEIVQAALLHSFVHLFPDRPAPIIFSEGHGREPWDATIDITRTVGWFTTICPAQVSLDASEDFVTALRRTKDARRRSPANGWEHFTARYLHPQGPKTMKGMEILFNYQGRYQQLERPDAMLKIDMANQFTAGDVAPDMQRFAPIEDRLYQWGPVCERSLRQAAAQLTGMSGHIQTVSDFPLGSSHVTSDLLDETLRTMRTRLANGRQLIVQDVYPCTPIQQGMLMGYTRTPWHYEQVLTWRVVGASLRDVARLQAAWQHVVNAHPALRTVFLQTSDGHIEQLVLQDYTPVVRIHQDSSHQSHAPEPEPVSLDALKPLHELHVHTSSTSGDVVLRLHINHALVDGTSTKILRRDLVCAYEGQPLPTMMLESQSYRDYVEYMLTQAASLKSHQYWQSHLQGALPCLVPSLQGHDGSNDLPQSVSTIRSFTMELGPTEALDTFCEVHELALTVLFHVAWALVVKQYTASEDVCFGYIASARHAPVQGIDDMVGPLINMLVGRIDMPAGMTLLSVLQQYNRTYLHSLEHQHQPLAEALNAIGSTSGELFNTLLTVQYQQDPRKDAAGDPSGIVLLDEDMEDKSEYPVTLNVAVFPDRVELLFSHHTAHMSDWYAARMARCFRHALAEVLTHPSLPVGEIQVVDDSQRQQILQRNEPLADPVNTCVHHIIHQRCLDFPASAAVCSWDGEFTYEELDTVSSALAEELIDYSIGVDMTIPVLLEKSRWVPVAVLGILKTGASFVLMDASHPEARLRGLCEDVQAPLILASRGTFSKASNLAPHVVCLGERLLGEIACPHPARWSRVPVCASNAAYTVFTSGSTGKPKGAILDHSCLATAAKHLQSCMYMNSASRVLQFSSHAWDIAVADIVLTLLAGGCVCIPSEEERTGDIAAAANRMRVNWAILTPTVSRLVKPGALKHLQTLVLAGEPLSPSDLAIWHDKVRLISAYGPAECCPISTVSEPLTASSNPRDIGRPPANVAWIVDRDNHARLVPEGVVGELLLEGPTVGRGYVNNAQQTAAAFIDPPLWLRGLRHGQSSTRLYKTGDLARFTPDGRLIFVGRKDNQIKIRGQRLELGEVEAQAGIAFLNRDVTVELVGQADDAFLVAFVHPMADDHESPAAGTGSLLRQPHSQQFQESVRAAISTLREALPSYMVPTAFLPLAWVPKSPTGKTDRKRLIELAASLSQSELDVYSGTNATRRTPSTPLEAQLQDLVARVLKRSPGSIALDEDLFHIGLDSLRAMTLASLAAKEGLKLLALTIFQHPRLSQLAAVLEEGARAAAVSSTTSSSPQSTPNPLLDSVDDLCTKWKIDRSQVADVLPTTFYQRGSLDCQHLAHMVLTFSQPVDVARLQSVVVAAIRHYDILRTVFVPFENTTVQLILHKMSLPTVEIQTDKDLQSTVQSICQQDIQTPIPPGHPVTRLFFVISRKQDDNHLAMILRLHHAQYDGVSIRRIHNYITAAYEEPTHPPLTTAGYADFLNARRHHQHASTFQFWRDLLHGSTMTCLASGGGHISTTTHRHRMDLLVTSAREIPRPRLQPGLTMATYLKAAWALVLAAQTHTHDLVFAQLVSGRNLPVPDIDRIVGPCINYIPVRVTLQPTWTCSELLRNVQAQHIRTMAHDAVDFDELVARSTAWPAGTEIGTGVHFLHGDRFWDEVRTVAGVECRSQHVDFKLLQTYPMLTCTGSPDAEEATGRSVLGVALTSAVFGQEVADRVFEVFLGMLDYLTTTPEKLVAEVI.

An adenylation 1 region spans residues 227-628 (GSILDTIRAK…DGSVIHVGRK (402 aa)). The 77-residue stretch at 773–849 (PPETVLEKAL…KLAQYLRNTE (77 aa)) folds into the Carrier 1 domain. Residue Ser810 is modified to O-(pantetheine 4'-phosphoryl)serine. A condensation 1 region spans residues 890–1212 (EDCYPCTALQ…CDFQSQLIFQ (323 aa)). An adenylation 2 region spans residues 1288–1622 (ELELNAQKEP…RKIRPGYLGR (335 aa)). The region spanning 1745–1822 (PPVSAAEKKW…EIAALSETRD (78 aa)) is the Carrier 2 domain. The residue at position 1782 (Ser1782) is an O-(pantetheine 4'-phosphoryl)serine. The condensation 2 stretch occupies residues 1850-2110 (ATNLIAATVH…GEKTRPGGGA (261 aa)). Residues 2183 to 2511 (RCVHDLVHDA…RTGDLIKLRG (329 aa)) are adenylation 3. Residues 2630–2708 (APQNRLQHDI…EADVGLDHAS (79 aa)) enclose the Carrier 3 domain. Ser2667 is subject to O-(pantetheine 4'-phosphoryl)serine. The segment at 2722–2998 (ESMARALAVI…KDARRRSPAN (277 aa)) is epimerase. A condensation 3 region spans residues 3128–3565 (VQDVYPCTPI…VDDSQRQQIL (438 aa)). Residues 3578–3980 (CVHHIIHQRC…FVGRKDNQIK (403 aa)) form an adenylation 4 region. The Carrier 4 domain occupies 4114–4190 (TPSTPLEAQL…QLAAVLEEGA (77 aa)). Ser4151 is subject to O-(pantetheine 4'-phosphoryl)serine. Positions 4249–4648 (HMVLTFSQPV…TTTPEKLVAE (400 aa)) are condensation 4.

It belongs to the NRP synthetase family. The cofactor is pantetheine 4'-phosphate.

Its pathway is alkaloid biosynthesis. Its function is as follows. Nonribosomal peptide synthetase; part of the gene cluster that mediates the biosynthesis of the ergot alkaloids lentopeptins A and B. Within the pathway, lenA catalyzes the biosynthesis of the Ala-Val-Ala peptide chain, including a cinnamic acid moiety as the starting unit. The release of the peptide from the enzyme is accomplished via a cyclization reaction catalyzed by the terminal condensation-like (Ct) domain of lenA to form the N-acyldiketopiperazine intermediate. The reaction appears to proceed through a nucleophilic attack on the carbonyl carbon by a lone electron pair of the valine amide nitrogen. The phenylalanine ammonia-lyase lenB provides the starter unit for the synthesis of the N-acyldiketopiperazine intermediate by the NRPS lenA, while the cytochrome P450 monooxygenase lenC is involved in the post-NRPS oxidative modification steps to form lentopeptins A and B. This chain is Nonribosomal peptide synthetase lenA, found in Aspergillus lentulus.